A 284-amino-acid chain; its full sequence is Tropomyosin Per a 7.0103 (284 aa).

Residues 1–266 (MDAIKKKMQA…EDELVHEKEK (266 aa)) are a coiled coil.

This sequence belongs to the tropomyosin family. In terms of assembly, homodimer.

Its function is as follows. Tropomyosin, in association with the troponin complex, plays a central role in the calcium dependent regulation of muscle contraction. The protein is Tropomyosin Per a 7.0103 of Periplaneta americana (American cockroach).